The primary structure comprises 119 residues: Large ribosomal subunit protein uL18 (119 aa).

The interval 1–20 is disordered; it reads MSQIDKAARRQKIKARSRAT. Residues 9–19 are compositionally biased toward basic residues; that stretch reads RRQKIKARSRA.

This sequence belongs to the universal ribosomal protein uL18 family. Part of the 50S ribosomal subunit; part of the 5S rRNA/L5/L18/L25 subcomplex. Contacts the 5S and 23S rRNAs.

In terms of biological role, this is one of the proteins that bind and probably mediate the attachment of the 5S RNA into the large ribosomal subunit, where it forms part of the central protuberance. This is Large ribosomal subunit protein uL18 from Chlorobaculum parvum (strain DSM 263 / NCIMB 8327) (Chlorobium vibrioforme subsp. thiosulfatophilum).